Reading from the N-terminus, the 176-residue chain is Ribonuclease mitogillin (176 aa).

The signal sequence occupies residues 1 to 27; it reads MVAIKNLFLLAATAVSVLAAPSPLDAR. Intrachain disulfides connect C32–C174 and C102–C158. H76 is a catalytic residue. E122 (proton acceptor) is an active-site residue. H163 (proton donor) is an active-site residue.

Belongs to the ribonuclease U2 family.

Its subcellular location is the secreted. In terms of biological role, this purine-specific ribonuclease cleaves 28S RNA in eukaryotic ribosomes, inhibits protein synthesis, and shows antitumor activity. In Aspergillus fumigatus (strain ATCC MYA-4609 / CBS 101355 / FGSC A1100 / Af293) (Neosartorya fumigata), this protein is Ribonuclease mitogillin (mitF).